Consider the following 435-residue polypeptide: MAQEEEKDAGISKYISTTDEIIIGCKCWVEKDGEQRLAEILSINNRRQPPKFYVHYEDFNKRLDEWILASRINIEREVTFPKPRDPDEKKKKKQKKSATPQATDGETLESADIMDLENLNVQGLRDEGISRDDEIKKLRTSGSMTQNPHEVSRVRNLSKIIMGKHEIEPWYFSPYPIELTDEDVVYIDDFSLQYFGSKKQYARYRQKCTLRHPPGNEIYRDDYVSFFEIDGRKQRTWCRNLCLLSKLFLDHKTLYYDVDPFLFYCMTQRDELGHHLVGYFSKEKESADGYNVACILTLPQYQRMGYGRLLIEFSYELSKKENKVGSPEKPLSDLGLLSYRAYWSDTLIKLLVENGTEITIDEISSMTSLTTTDILHTAKALNILRYYKGQHILYLNEDVLLRYEKLIAKKRRSIDPEKLIWKPPIFTASQLRFAW.

A Tudor-knot domain is found at 22 to 73 (IIGCKCWVEKDGEQRLAEILSINNRRQPPKFYVHYEDFNKRLDEWILASRIN). Residues 78–89 (VTFPKPRDPDEK) are compositionally biased toward basic and acidic residues. The segment at 78-108 (VTFPKPRDPDEKKKKKQKKSATPQATDGETL) is disordered. The MYST-type HAT domain occupies 152–423 (SRVRNLSKII…IDPEKLIWKP (272 aa)). The C2HC MYST-type; degenerate zinc finger occupies 185–210 (VYIDDFSLQYFGSKKQYARYRQKCTL). An ESA1-RPD3 motif motif is present at residues 235 to 256 (RTWCRNLCLLSKLFLDHKTLYY). Lysine 252 is subject to N6-acetyllysine; by autocatalysis. Acetyl-CoA is bound by residues 293–297 (ACILT) and 302–308 (QRMGYGR). The active-site Proton donor/acceptor is the glutamate 328. Serine 332 contributes to the acetyl-CoA binding site.

The protein belongs to the MYST (SAS/MOZ) family. In terms of assembly, component of the NuA4 histone acetyltransferase complex. Interacts with arp4. In terms of processing, autoacetylation at Lys-252 is required for proper function.

The protein localises to the nucleus. Its subcellular location is the chromosome. The enzyme catalyses L-lysyl-[histone] + acetyl-CoA = N(6)-acetyl-L-lysyl-[histone] + CoA + H(+). The catalysed reaction is L-lysyl-[protein] + acetyl-CoA = N(6)-acetyl-L-lysyl-[protein] + CoA + H(+). It carries out the reaction 2-hydroxyisobutanoyl-CoA + L-lysyl-[protein] = N(6)-(2-hydroxyisobutanoyl)-L-lysyl-[protein] + CoA + H(+). It catalyses the reaction (2E)-butenoyl-CoA + L-lysyl-[protein] = N(6)-(2E)-butenoyl-L-lysyl-[protein] + CoA + H(+). Catalytic component of the NuA4 histone acetyltransferase (HAT) complex which is involved in epigenetic transcriptional activation of selected genes principally by acetylation of nucleosomal histones H4, H3, H2B, H2A and H2A variant H2A.Z. Acetylates histone H4 to form H4K5ac, H4K8ac, H4K12ac and H4K16ac, histone H3 to form H3K14ac, and histone H2A to form H2AK4ac and H2AK7ac. The NuA4 complex is involved in the DNA damage response and is required for chromosome segregation. The NuA4 complex plays a direct role in repair of DNA double-strand breaks (DSBs) through homologous recombination. Recruitment to promoters depends on H3K4me. Also acetylates non-histone proteins. In addition to protein acetyltransferase, can use different acyl-CoA substrates, such as 2-hydroxyisobutanoyl-CoA (2-hydroxyisobutyryl-CoA) or (2E)-butenoyl-CoA (crotonyl-CoA), and is able to mediate protein 2-hydroxyisobutyrylation and crotonylation, respectively. The polypeptide is Histone acetyltransferase ESA1 (ESA1) (Eremothecium gossypii (strain ATCC 10895 / CBS 109.51 / FGSC 9923 / NRRL Y-1056) (Yeast)).